Here is a 260-residue protein sequence, read N- to C-terminus: Transmembrane protein 106C (260 aa).

A lipid anchor (N-myristoyl glycine) is attached at Gly2. A helical membrane pass occupies residues 85 to 105 (YVLLSVLLCLLASGLVFFFLF). Asn184 carries N-linked (GlcNAc...) asparagine glycosylation. A helical membrane pass occupies residues 196 to 216 (SYVYFYCTLPAIRVHNIVIFM).

This sequence belongs to the TMEM106 family. In terms of assembly, interacts with TMEM106B.

It localises to the endoplasmic reticulum membrane. It is found in the membrane. The sequence is that of Transmembrane protein 106C (Tmem106c) from Mus musculus (Mouse).